A 172-amino-acid chain; its full sequence is Ribosome maturation factor RimM (172 aa).

One can recognise a PRC barrel domain in the interval 95-168 (DDGEFYYHEI…RVDVEILEGL (74 aa)).

It belongs to the RimM family. Binds ribosomal protein uS19.

Its subcellular location is the cytoplasm. Functionally, an accessory protein needed during the final step in the assembly of 30S ribosomal subunit, possibly for assembly of the head region. Essential for efficient processing of 16S rRNA. May be needed both before and after RbfA during the maturation of 16S rRNA. It has affinity for free ribosomal 30S subunits but not for 70S ribosomes. In Streptococcus pneumoniae (strain P1031), this protein is Ribosome maturation factor RimM.